The primary structure comprises 591 residues: Formate--tetrahydrofolate ligase (591 aa).

74 to 81 (TPLGEGKS) provides a ligand contact to ATP.

The protein belongs to the formate--tetrahydrofolate ligase family.

The enzyme catalyses (6S)-5,6,7,8-tetrahydrofolate + formate + ATP = (6R)-10-formyltetrahydrofolate + ADP + phosphate. Its pathway is one-carbon metabolism; tetrahydrofolate interconversion. This Desulforapulum autotrophicum (strain ATCC 43914 / DSM 3382 / VKM B-1955 / HRM2) (Desulfobacterium autotrophicum) protein is Formate--tetrahydrofolate ligase.